We begin with the raw amino-acid sequence, 405 residues long: Pleckstrin homology-like domain family A member 1 (405 aa).

2 stretches are compositionally biased toward basic and acidic residues: residues 1-11 (MRRTPAAERLS) and 54-63 (RSPEDGREQP). Disordered stretches follow at residues 1–67 (MRRT…AHGS), 189–217 (QLQQ…VASL), and 293–405 (QQHL…SNSA). Residues 153–277 (ALKEGVLEKR…AEITLQMVQY (125 aa)) form the PH domain. Over residues 189–202 (QLQQQQQQQQPGQG) the composition is skewed to low complexity. Polar residues predominate over residues 204 to 213 (AEPSQPSGPT). Residues 294–309 (QHLVQQQPPQTQQIQP) are compositionally biased toward low complexity. Residues 309–344 (PQPQPQIQPQPQPQIQPQPQPQPQPQPQPQPQPQPQ) form a 16 X 2 AA repeats of P-Q region. Positions 310-342 (QPQPQIQPQPQPQIQPQPQPQPQPQPQPQPQPQ) are enriched in pro residues. Positions 350 to 376 (PHPHPHPYSHPHQHPHPHPHPHPHPHP) are enriched in basic residues. The 11 X 2 AA repeats of P-H stretch occupies residues 354–377 (PHPYSHPHQHPHPHPHPHPHPHPH). A compositionally biased stretch (low complexity) spans 378–389 (PYQLQHAHQPLH).

In terms of assembly, interacts with RPL14, EIF3S7 and PABPC4. In terms of tissue distribution, widely expressed with very high levels in adult liver and high levels in adult lung. According to PubMed:10428057 expressed at low levels in liver. Expressed at increased levels in atherosclerotic lesions observed in hyperhomocysteinema.

It is found in the cytoplasm. It localises to the cytoplasmic vesicle. Its subcellular location is the nucleus. The protein localises to the nucleolus. In terms of biological role, seems to be involved in regulation of apoptosis. May be involved in detachment-mediated programmed cell death. May mediate apoptosis during neuronal development. May be involved in regulation of anti-apoptotic effects of IGF1. Required for TCR-induced apoptosis and expression of TNFRSF6/FAS in a T-cell hybridoma cell line. May be involved in translational regulation. The protein is Pleckstrin homology-like domain family A member 1 (Phlda1) of Mus musculus (Mouse).